The primary structure comprises 350 residues: Dihydroorotase (350 aa).

Zn(2+) contacts are provided by H17 and H19. Substrate-binding positions include 19–21 (HLR) and N45. K103, H140, and H178 together coordinate Zn(2+). K103 carries the N6-carboxylysine modification. H140 contributes to the substrate binding site. A substrate-binding site is contributed by L224. D252 lines the Zn(2+) pocket. Residue D252 is part of the active site. The substrate site is built by H256 and A268.

This sequence belongs to the metallo-dependent hydrolases superfamily. DHOase family. Class II DHOase subfamily. As to quaternary structure, homodimer. It depends on Zn(2+) as a cofactor.

It carries out the reaction (S)-dihydroorotate + H2O = N-carbamoyl-L-aspartate + H(+). Its pathway is pyrimidine metabolism; UMP biosynthesis via de novo pathway; (S)-dihydroorotate from bicarbonate: step 3/3. Catalyzes the reversible cyclization of carbamoyl aspartate to dihydroorotate. The sequence is that of Dihydroorotase from Buchnera aphidicola subsp. Acyrthosiphon pisum (strain 5A).